We begin with the raw amino-acid sequence, 210 residues long: Large ribosomal subunit protein uL3 (210 aa).

The tract at residues 133–152 (ATHGNSLSHRVHGSTGQNQT) is disordered. Glutamine 151 bears the N5-methylglutamine mark.

This sequence belongs to the universal ribosomal protein uL3 family. As to quaternary structure, part of the 50S ribosomal subunit. Forms a cluster with proteins L14 and L19. Post-translationally, methylated by PrmB.

One of the primary rRNA binding proteins, it binds directly near the 3'-end of the 23S rRNA, where it nucleates assembly of the 50S subunit. The protein is Large ribosomal subunit protein uL3 of Francisella philomiragia subsp. philomiragia (strain ATCC 25017 / CCUG 19701 / FSC 153 / O#319-036).